Reading from the N-terminus, the 526-residue chain is Acetyl-CoA hydrolase (526 aa).

277 to 281 (GIGNI) contributes to the CoA binding site. Glutamate 302 (5-glutamyl coenzyme A thioester intermediate) is an active-site residue. The CoA site is built by asparagine 392 and glycine 396.

This sequence belongs to the acetyl-CoA hydrolase/transferase family.

Its subcellular location is the cytoplasm. It catalyses the reaction acetyl-CoA + H2O = acetate + CoA + H(+). Presumably involved in regulating the intracellular acetyl-CoA pool for fatty acid and cholesterol synthesis and fatty acid oxidation. The sequence is that of Acetyl-CoA hydrolase (ACH1) from Candida glabrata (strain ATCC 2001 / BCRC 20586 / JCM 3761 / NBRC 0622 / NRRL Y-65 / CBS 138) (Yeast).